A 244-amino-acid polypeptide reads, in one-letter code: Probable transcriptional regulatory protein TT_C0469 (244 aa).

Belongs to the TACO1 family.

It localises to the cytoplasm. The protein is Probable transcriptional regulatory protein TT_C0469 of Thermus thermophilus (strain ATCC BAA-163 / DSM 7039 / HB27).